The primary structure comprises 875 residues: Transcription factor tenR (875 aa).

The zn(2)-C6 fungal-type DNA-binding region spans 16–44 (CSECRRRKIRCDRGFPCGPCRKSLPALSC). Disordered stretches follow at residues 54–73 (AASA…PKVN), 136–172 (DHEK…GVNP), and 620–642 (PHED…TGSR). Polar residues-rich tracts occupy residues 153–168 (PGST…SHSA) and 627–642 (SIQS…TGSR).

Its subcellular location is the nucleus. Transcription factor that positively regulates the expression of the genes that mediate the biosynthesis of tenellin-type 2-pyridones, iron-chelating compounds involved in iron stress tolerance, competition with the natural competitor fungus Metarhizium robertsii and insect hosts infection. This Beauveria bassiana (strain ARSEF 2860) (White muscardine disease fungus) protein is Transcription factor tenR.